We begin with the raw amino-acid sequence, 30 residues long: Dendrotoxin A (30 aa).

A disulfide bond links Cys3 and Cys22.

Belongs to the three-finger toxin family. Short-chain subfamily. Acn-esterase inhibitor sub-subfamily. In terms of processing, contains 4 disulfide bonds. Expressed by the venom gland.

The protein localises to the secreted. Functionally, inhibits acetylcholinesterase. Has been described to inhibit both the slowly and the rapidly inactivating phases of potassium efflux. This chain is Dendrotoxin A, found in Dendroaspis angusticeps (Eastern green mamba).